The chain runs to 112 residues: Putative pterin-4-alpha-carbinolamine dehydratase (112 aa).

Belongs to the pterin-4-alpha-carbinolamine dehydratase family.

The catalysed reaction is (4aS,6R)-4a-hydroxy-L-erythro-5,6,7,8-tetrahydrobiopterin = (6R)-L-erythro-6,7-dihydrobiopterin + H2O. This Vibrio campbellii (strain ATCC BAA-1116) protein is Putative pterin-4-alpha-carbinolamine dehydratase.